A 179-amino-acid chain; its full sequence is Putative 5'(3')-deoxyribonucleotidase (179 aa).

Residue Asp-9 is the Nucleophile of the active site. The Mg(2+) site is built by Asp-9, Asp-11, and Asp-135. Asp-11 serves as the catalytic Proton donor.

This sequence belongs to the 5'(3')-deoxyribonucleotidase family. Mg(2+) is required as a cofactor.

Functionally, dephosphorylates the 5' and 2'(3')-phosphates of deoxyribonucleotides. This chain is Putative 5'(3')-deoxyribonucleotidase, found in Staphylococcus epidermidis (strain ATCC 12228 / FDA PCI 1200).